The sequence spans 265 residues: Hydroxyethylthiazole kinase (265 aa).

A substrate-binding site is contributed by M43. The ATP site is built by K118 and T165. G192 lines the substrate pocket.

This sequence belongs to the Thz kinase family. Mg(2+) serves as cofactor.

It carries out the reaction 5-(2-hydroxyethyl)-4-methylthiazole + ATP = 4-methyl-5-(2-phosphooxyethyl)-thiazole + ADP + H(+). It participates in cofactor biosynthesis; thiamine diphosphate biosynthesis; 4-methyl-5-(2-phosphoethyl)-thiazole from 5-(2-hydroxyethyl)-4-methylthiazole: step 1/1. Functionally, catalyzes the phosphorylation of the hydroxyl group of 4-methyl-5-beta-hydroxyethylthiazole (THZ). This Pyrococcus abyssi (strain GE5 / Orsay) protein is Hydroxyethylthiazole kinase.